Consider the following 164-residue polypeptide: MNPRRKSRLYLAIVVLIGVALTATLMLYALRSNIDLFYTPSEILQGKGENHEKPEVGQRLRIGGMVMPGSVKRDQKTLQVSFKVYDARGAIDVTYTGILPDLFREGQGVVAQGVLGEGNVVNAREVLAKHDEKYTPPEVADAMKENHKGPASAYATPQNEGAKS.

The Cytoplasmic portion of the chain corresponds to 1–8; sequence MNPRRKSR. Residues 9 to 29 traverse the membrane as a helical; Signal-anchor for type II membrane protein segment; that stretch reads LYLAIVVLIGVALTATLMLYA. Residues 30-164 lie on the Periplasmic side of the membrane; sequence LRSNIDLFYT…ATPQNEGAKS (135 aa). His130 and Tyr134 together coordinate heme. Residues 131 to 148 show a composition bias toward basic and acidic residues; the sequence is DEKYTPPEVADAMKENHK. A disordered region spans residues 131-164; the sequence is DEKYTPPEVADAMKENHKGPASAYATPQNEGAKS. The segment covering 155–164 has biased composition (polar residues); it reads ATPQNEGAKS.

The protein belongs to the CcmE/CycJ family.

The protein localises to the cell inner membrane. In terms of biological role, heme chaperone required for the biogenesis of c-type cytochromes. Transiently binds heme delivered by CcmC and transfers the heme to apo-cytochromes in a process facilitated by CcmF and CcmH. The protein is Cytochrome c-type biogenesis protein CcmE of Serratia proteamaculans (strain 568).